The following is a 500-amino-acid chain: Na(+)/H(+) antiporter NhaB (500 aa).

The next 12 membrane-spanning stretches (helical) occupy residues 28-50, 68-88, 98-118, 121-141, 145-165, 205-225, 244-264, 311-331, 350-370, 394-414, 449-469, and 477-497; these read FLLLNPLLLWLAGPVTSAWVLVG, GGLLVLEALLLGLATPEALYA, LLLMFMVAGIYFMKDLLLLLF, LLLGVRSKTLLSLLFCLLAAL, FLDALTVTAVVISVAVAFFAV, LLMHAAVGTALGGVCTLVGEP, QVAPVSMPVLAAGLLTCVLLE, VLIVGLALHVAEVGLIGLLVI, FQEALPFTALLVVFFAVVAVI, MLFIANGLLSAISDNVFVATI, VATPNGQAAFLFLLTSSIAPL, and MVWMALPYTLVMGGLGWWAVS.

This sequence belongs to the NhaB Na(+)/H(+) (TC 2.A.34) antiporter family.

The protein localises to the cell inner membrane. The catalysed reaction is 2 Na(+)(in) + 3 H(+)(out) = 2 Na(+)(out) + 3 H(+)(in). Its function is as follows. Na(+)/H(+) antiporter that extrudes sodium in exchange for external protons. This Pseudomonas aeruginosa (strain LESB58) protein is Na(+)/H(+) antiporter NhaB.